The primary structure comprises 281 residues: 2,3,4,5-tetrahydropyridine-2,6-dicarboxylate N-succinyltransferase (281 aa).

Positions 108 and 145 each coordinate substrate.

The protein belongs to the transferase hexapeptide repeat family. As to quaternary structure, homotrimer.

Its subcellular location is the cytoplasm. It carries out the reaction (S)-2,3,4,5-tetrahydrodipicolinate + succinyl-CoA + H2O = (S)-2-succinylamino-6-oxoheptanedioate + CoA. The protein operates within amino-acid biosynthesis; L-lysine biosynthesis via DAP pathway; LL-2,6-diaminopimelate from (S)-tetrahydrodipicolinate (succinylase route): step 1/3. This is 2,3,4,5-tetrahydropyridine-2,6-dicarboxylate N-succinyltransferase from Rhodopseudomonas palustris (strain BisA53).